Consider the following 343-residue polypeptide: Retroviral-like aspartic protease 1 (343 aa).

Residues 1-55 (MGSPGASLGIKKALQSEQATALPASAPAVSQPTAPAPSCLPKAGQVIPTLLREAP) lie on the Cytoplasmic side of the membrane. The propeptide occupies 1–190 (MGSPGASLGI…HLPKEIVFAN (190 aa)). A helical transmembrane segment spans residues 56 to 76 (FSSVIAPTLLCGFLFLAWVAA). Residues 77–343 (EVPEESSRMA…SEEGRQELSH (267 aa)) lie on the Extracellular side of the membrane. The 82-residue stretch at 207–288 (VRFLVDSGAQ…AEEAIIGTDV (82 aa)) folds into the Peptidase A2 domain. D212 is a catalytic residue. N-linked (GlcNAc...) asparagine glycosylation is present at N276. The propeptide occupies 327 to 343 (LIEEDPSSEEGRQELSH).

In terms of assembly, homodimer. Undergoes autocleavage which is necessary for activation of the protein. As to expression, expressed primarily in the granular layer of the epidermis and inner root sheath of hair follicles. In psoriatic skin, expressed throughout the stratum corneum. In ulcerated skin, expressed in the stratum granulosum of intact epidermis but almost absent from ulcerated regions. Expressed in differentiated areas of squamous cell carcinomas but not in undifferentiated tumors.

The protein localises to the membrane. Its function is as follows. Protease responsible for filaggrin processing, essential for the maintenance of a proper epidermis organization. The polypeptide is Retroviral-like aspartic protease 1 (Homo sapiens (Human)).